A 574-amino-acid polypeptide reads, in one-letter code: MTIEFSNFSFRYESLDKPTLRNINLRIEKGEKIVIIGPSGSGKSTLGQCLNGLIPHAIKGEVSGSLTINGQETATFAMHQFTEQVGTVLQDTDSQFVGLSIGEDIAFALENQLTSNIEMYSLVKATAKMVDLEQMLQRSPHDLSGGQKQRVSLAGILVDDVDILLFDEPLAALDPKTGKRTIEIIDELHRKTGKTVVIIEHRLEDVLHRHVDRIILMDDGEIMADTTPDELLASPLLAQYGIREPLYLTALKSAGCHLALDDHPSSLSELPLANYQHAMADWFHQANTTSNHIRSETLLDVRNLTYSYDGEKNALEGVSFNVQRGEFVSILGKNGSGKSTITKLIMGVIEPDDGAIYLNGQDLSELTIFERSQKVGVVMQNPNHMISHHMIFDEVAFGLRNRGWDEQQVNDKVLEVLELCGLSKYRHWPIEALSYGQKKRVTIASILALEPELLILDEPTAGQDYRNYTSMLSFIEKLNRELGITVVIISHDMHLVLEYTTRSIVIADSQLVADAPMTDVFSNPALLDQANLTTTSLYELATRLNMAETNAFMQHFIDVEKASRLEKTVERNVA.

ABC transporter domains are found at residues 3 to 244 and 299 to 533; these read IEFS…GIRE and LDVR…ANLT. Residues 37 to 44 and 332 to 339 each bind ATP; these read GPSGSGKS and GKNGSGKS.

Belongs to the ABC transporter superfamily.

The protein localises to the cell inner membrane. Probably part of an ABC transporter complex. Responsible for energy coupling to the transport system. This is Putative ABC transporter ATP-binding protein VV2_1533 from Vibrio vulnificus (strain CMCP6).